The sequence spans 605 residues: Glucose oxidase (605 aa).

The first 18 residues, 1–18 (MVSVFLSTLLLAAATVQA), serve as a signal peptide directing secretion. Positions 52, 53, and 73 each coordinate FAD. A glycan (N-linked (GlcNAc...) asparagine) is linked at asparagine 111. 4 residues coordinate FAD: serine 125, asparagine 129, glycine 130, and serine 132. N-linked (GlcNAc...) asparagine glycosylation is found at asparagine 183 and asparagine 190. Cysteine 186 and cysteine 228 are oxidised to a cystine. Valine 272 contacts FAD. N-linked (GlcNAc...) asparagine glycosylation is found at asparagine 335, asparagine 375, asparagine 410, and asparagine 519. Residue histidine 538 is the Proton acceptor of the active site. Residues lysine 559 and valine 560 each contribute to the O2 site. Residues glycine 571 and methionine 583 each contribute to the FAD site.

Belongs to the GMC oxidoreductase family. In terms of assembly, homodimer. Requires FAD as cofactor.

It localises to the secreted. The protein resides in the cell wall. Its subcellular location is the cytoplasmic vesicle. It catalyses the reaction beta-D-glucose + O2 = D-glucono-1,5-lactone + H2O2. Functionally, glucose oxidase catalyzes the oxidation of beta-D-glucose to D-glucono-delta-lactone and hydrogen peroxide in the presence of molecular oxygen. D-glucono-delta-lactone is sequentially hydrolyzed by lactonase to D-gluconic acid, and the resulting hydrogen peroxide is hydrolyzed by catalase to oxygen and water. Glucose oxidase alone indirectly causes toxicity in the presence of glucose and is the active compound of the antifungal antibiotic talaron. Responsible for inhibition of germination of microsclerotia of Verticillium dahliae. This is Glucose oxidase from Talaromyces flavus.